A 133-amino-acid chain; its full sequence is NADPH-dependent 7-cyano-7-deazaguanine reductase (133 aa).

Residue Cys-49 is the Thioimide intermediate of the active site. Asp-56 (proton donor) is an active-site residue. Substrate is bound by residues 71-73 and 90-91; these read IEL and HE.

Belongs to the GTP cyclohydrolase I family. QueF type 1 subfamily.

Its subcellular location is the cytoplasm. It carries out the reaction 7-aminomethyl-7-carbaguanine + 2 NADP(+) = 7-cyano-7-deazaguanine + 2 NADPH + 3 H(+). The protein operates within tRNA modification; tRNA-queuosine biosynthesis. In terms of biological role, catalyzes the NADPH-dependent reduction of 7-cyano-7-deazaguanine (preQ0) to 7-aminomethyl-7-deazaguanine (preQ1). The sequence is that of NADPH-dependent 7-cyano-7-deazaguanine reductase from Leptospira interrogans serogroup Icterohaemorrhagiae serovar copenhageni (strain Fiocruz L1-130).